Reading from the N-terminus, the 148-residue chain is Photosystem I reaction center subunit XI (148 aa).

Helical transmembrane passes span 48 to 68 (LEIG…LGPL), 73 to 93 (IGLL…TLGL), and 122 to 142 (GGFF…LSSI).

Belongs to the PsaL family.

It localises to the plastid. The protein localises to the chloroplast thylakoid membrane. This Thalassiosira pseudonana (Marine diatom) protein is Photosystem I reaction center subunit XI.